The following is a 196-amino-acid chain: Calcineurin B homologous protein 2 (196 aa).

A lipid anchor (N-myristoyl glycine) is attached at Gly2. EF-hand domains are found at residues 26-61 (ASLL…AVNP), 71-106 (FPDG…PKKP), 111-146 (SRRN…MVGV), and 152-187 (QLEN…MDVE). Ser27 carries the post-translational modification Phosphoserine. Ca(2+) contacts are provided by Asp124, Asp126, Asp128, Lys130, and Glu135. The Nuclear export signal signature appears at 137–148 (LQVLRLMVGVQV). Ca(2+) is bound by residues Asp165, Asp167, Asp169, and Glu176.

This sequence belongs to the calcineurin regulatory subunit family. CHP subfamily. In terms of assembly, interacts with PPP3CA. Interacts with SLC9A1/NHE1; the interaction occurs in a calcium-dependent manner. As to expression, expressed in malignantly transformed cells but not detected in normal tissues.

The protein resides in the nucleus. The protein localises to the cytoplasm. It localises to the cell membrane. In terms of biological role, functions as an integral cofactor in cell pH regulation by controlling plasma membrane-type Na(+)/H(+) exchange activity. Binds to and activates SLC9A1/NHE1 in a serum-independent manner, thus increasing pH and protecting cells from serum deprivation-induced death. Also plays a role in the regulation of cell proliferation and tumor growth by increasing the phosphatase activity of PPP3CA in a calcium-dependent manner. Activator of the calcineurin/NFAT signaling pathway. Involved in the cytoplasmic translocation of the transcription factor NFATC3 to the nucleus. The sequence is that of Calcineurin B homologous protein 2 (CHP2) from Homo sapiens (Human).